We begin with the raw amino-acid sequence, 239 residues long: Tetraspanin-9 (239 aa).

Over 1–13 (MARGCLCCLKYTM) the chain is Cytoplasmic. The chain crosses the membrane as a helical span at residues 14 to 34 (FLFNLIFWLCGCGLLGVGIWL). At 35–55 (SVSQGNFATFSPSFPSLSAAN) the chain is on the extracellular side. Residues 56-76 (LVIAIGTIVMVTGFLGCLGAI) form a helical membrane-spanning segment. At 77–85 (KENKCLLLS) the chain is on the cytoplasmic side. Residues 86–106 (FFIVLLIILLAELILIILFFV) traverse the membrane as a helical segment. The Extracellular portion of the chain corresponds to 107–203 (YMDKVNENAK…VKLWFDDNKH (97 aa)). N-linked (GlcNAc...) asparagine glycosylation is present at Asn-180. A helical transmembrane segment spans residues 204–224 (VLGTVGMCILIMQILGMAFSM). Over 225-239 (TLFQHIHRTGKKYDA) the chain is Cytoplasmic.

This sequence belongs to the tetraspanin (TM4SF) family. As to quaternary structure, found in a complex with GP6. In terms of processing, glycosylated. In terms of tissue distribution, strongly expressed in megakaryocytes, platelets and lung. Weakly expressed in bone marrow, brain and kidney (at protein level).

The protein resides in the membrane. In Mus musculus (Mouse), this protein is Tetraspanin-9 (Tspan9).